A 201-amino-acid polypeptide reads, in one-letter code: uncharacterized protein (201 aa).

The signal sequence occupies residues 1–23; the sequence is MKILYFIFVIIINILLILNHVKS. Residues 24–178 lie on the Extracellular side of the membrane; that stretch reads KYNTFIFENT…GNYGEDPQRN (155 aa). 2 N-linked (GlcNAc...) asparagine glycosylation sites follow: Asn-114 and Asn-134. Residues 122–157 form a disordered region; the sequence is TPETPSPTENAPNTSGGSSEGNHYTYKSSSSSSEHI. A compositionally biased stretch (polar residues) spans 123-148; it reads PETPSPTENAPNTSGGSSEGNHYTYK. A helical membrane pass occupies residues 179 to 199; it reads IGISLSSSLIFISILFLIIFI. Topologically, residues 200–201 are cytoplasmic; sequence NN.

It is found in the membrane. This is an uncharacterized protein from Dictyostelium discoideum (Social amoeba).